The chain runs to 296 residues: LysM and putative peptidoglycan-binding domain-containing protein 4 (296 aa).

At methionine 1 to glutamine 217 the chain is on the extracellular side. The interval lysine 29–glycine 67 is disordered. Asparagine 30 carries an N-linked (GlcNAc...) asparagine glycan. A compositionally biased stretch (basic residues) spans valine 46–glycine 59. A LysM domain is found at leucine 74 to isoleucine 118. A helical transmembrane segment spans residues tryptophan 218 to valine 238. The Cytoplasmic portion of the chain corresponds to tyrosine 239–serine 296.

The protein resides in the membrane. This Homo sapiens (Human) protein is LysM and putative peptidoglycan-binding domain-containing protein 4 (LYSMD4).